Consider the following 217-residue polypeptide: Protein-L-isoaspartate O-methyltransferase (217 aa).

Ser61 is a catalytic residue.

This sequence belongs to the methyltransferase superfamily. L-isoaspartyl/D-aspartyl protein methyltransferase family.

It localises to the cytoplasm. The catalysed reaction is [protein]-L-isoaspartate + S-adenosyl-L-methionine = [protein]-L-isoaspartate alpha-methyl ester + S-adenosyl-L-homocysteine. Its function is as follows. Catalyzes the methyl esterification of L-isoaspartyl residues in peptides and proteins that result from spontaneous decomposition of normal L-aspartyl and L-asparaginyl residues. It plays a role in the repair and/or degradation of damaged proteins. This chain is Protein-L-isoaspartate O-methyltransferase, found in Syntrophotalea carbinolica (strain DSM 2380 / NBRC 103641 / GraBd1) (Pelobacter carbinolicus).